Consider the following 137-residue polypeptide: Basic phospholipase A2 homolog Cax-K49 (137 aa).

An N-terminal signal peptide occupies residues 1–16; it reads MRTFWIVAMLLVGVEG. 7 disulfides stabilise this stretch: C42/C131, C44/C60, C59/C111, C65/C137, C66/C104, C73/C97, and C91/C102. Residues 121–133 form an important for membrane-damaging activities in eukaryotes and bacteria; heparin-binding region; that stretch reads KKYKIYPKFLCKK.

In terms of assembly, homodimer; non-covalently linked. Expressed by the venom gland.

It localises to the secreted. Functionally, snake venom phospholipase A2 homolog that lacks enzymatic activity. Displays edema-inducing activities and may be myotoxic. A model of myotoxic mechanism has been proposed: an apo Lys49-PLA2 is activated by the entrance of a hydrophobic molecule (e.g. fatty acid) at the hydrophobic channel of the protein leading to a reorientation of a monomer. This reorientation causes a transition between 'inactive' to 'active' states, causing alignment of C-terminal and membrane-docking sites (MDoS) side-by-side and putting the membrane-disruption sites (MDiS) in the same plane, exposed to solvent and in a symmetric position for both monomers. The MDoS region stabilizes the toxin on membrane by the interaction of charged residues with phospholipid head groups. Subsequently, the MDiS region destabilizes the membrane with penetration of hydrophobic residues. This insertion causes a disorganization of the membrane, allowing an uncontrolled influx of ions (i.e. calcium and sodium), and eventually triggering irreversible intracellular alterations and cell death. In Crotalus atrox (Western diamondback rattlesnake), this protein is Basic phospholipase A2 homolog Cax-K49.